Consider the following 491-residue polypeptide: UDP-N-acetylmuramate--L-alanine ligase (491 aa).

ATP is bound at residue Gly126–Thr132.

This sequence belongs to the MurCDEF family.

The protein resides in the cytoplasm. The catalysed reaction is UDP-N-acetyl-alpha-D-muramate + L-alanine + ATP = UDP-N-acetyl-alpha-D-muramoyl-L-alanine + ADP + phosphate + H(+). The protein operates within cell wall biogenesis; peptidoglycan biosynthesis. Cell wall formation. The sequence is that of UDP-N-acetylmuramate--L-alanine ligase from Shigella flexneri.